The following is a 134-amino-acid chain: Profilin-2 (134 aa).

A disulfide bridge links Cys-13 with Cys-118. The Involved in PIP2 interaction motif lies at 84-100 (AVIRGKKGSGGITIKKT). Position 114 is a phosphothreonine (Thr-114).

Belongs to the profilin family. Phosphorylated by MAP kinases.

Its subcellular location is the cytoplasm. It is found in the cytoskeleton. This chain is Profilin-2, found in Olea europaea (Common olive).